Here is a 242-residue protein sequence, read N- to C-terminus: Putative prolyl 4-hydroxylase (242 aa).

Positions 128–238 (NAEDLQVVRY…KWIANLWFRE (111 aa)) constitute a Fe2OG dioxygenase domain.

Belongs to the P4HA family. Fe cation serves as cofactor. L-ascorbate is required as a cofactor.

Its subcellular location is the virion. The enzyme catalyses L-prolyl-[collagen] + 2-oxoglutarate + O2 = trans-4-hydroxy-L-prolyl-[collagen] + succinate + CO2. Its function is as follows. May catalyze the post-translational formation of 4-hydroxyproline in -Xaa-Pro-Gly- sequences in the 6 collagen-like proteins of Mimivirus. This is Putative prolyl 4-hydroxylase from Acanthamoeba polyphaga mimivirus (APMV).